Here is a 245-residue protein sequence, read N- to C-terminus: tRNA1(Val) (adenine(37)-N6)-methyltransferase (245 aa).

The protein belongs to the methyltransferase superfamily. tRNA (adenine-N(6)-)-methyltransferase family.

Its subcellular location is the cytoplasm. The enzyme catalyses adenosine(37) in tRNA1(Val) + S-adenosyl-L-methionine = N(6)-methyladenosine(37) in tRNA1(Val) + S-adenosyl-L-homocysteine + H(+). Functionally, specifically methylates the adenine in position 37 of tRNA(1)(Val) (anticodon cmo5UAC). The polypeptide is tRNA1(Val) (adenine(37)-N6)-methyltransferase (Escherichia coli O139:H28 (strain E24377A / ETEC)).